A 425-amino-acid chain; its full sequence is Pectate lyase L (425 aa).

An N-terminal signal peptide occupies residues 1–25; it reads MKYLNCFISTGLAAFFLVNSTSVLA. A disulfide bridge connects residues Cys28 and Cys114. Asp209, Asp233, Asp234, and Asp237 together coordinate Ca(2+). The active-site Proton acceptor is the Lys273. Positions 402, 413, 416, 418, and 423 each coordinate Ca(2+).

It belongs to the polysaccharide lyase 9 family. Requires Ca(2+) as cofactor.

The protein localises to the secreted. The catalysed reaction is Eliminative cleavage of (1-&gt;4)-alpha-D-galacturonan to give oligosaccharides with 4-deoxy-alpha-D-galact-4-enuronosyl groups at their non-reducing ends.. It functions in the pathway glycan metabolism; pectin degradation; 2-dehydro-3-deoxy-D-gluconate from pectin: step 2/5. Its function is as follows. Presents an endo-cleaving activity on polygalacturonate or partially methylated pectin. Is effective in the maceration of plant tissue, and has an important role in soft-rot disease. Is 280-fold less active against polygalacturonate than the major pectate lyase PelB. When assayed on polygalacturonate, PelL releases oligogalacturonates of different sizes; upon prolonged incubation, PelL degrades the primary products to unsaturated tetramer and pentamer in addition to unsaturated dimer and trimer. When assayed on oligogalacturonates (degrees of polymerization of 2 to 8), it preferentially forms unsaturated tetramer, and displays the highest activity on the octamer. This chain is Pectate lyase L (pelL), found in Dickeya dadantii (strain 3937) (Erwinia chrysanthemi (strain 3937)).